A 2430-amino-acid chain; its full sequence is MYLYKSIKSYKMQGKSKRKKEAFPTSKACGKLGKNRIFPLEEKRSGKKERPLALSFQASFFSPFFLFANCTRKTKTLKQNSLSLSSSYLNIFSDFSLYSLSPKKKTSLTDNKIVSFATKDFPQVFWNLSFNKGSLKNFVFWCFVNYGQRETIKILEKLQIIGFGYATKAGISLSIDDLKIPPTKAILLADADKSIEAGFLSYKKSQLTGLERFQRIIETWHKTSESLKDEMITNFRQTDSLNPVYMMAFSGARGNVSQVRQLVAMRGLMSDPQGKILDFPIRSNFREGLTLTEYVISCYGARKGVVDTALRTANAGYLTRRLVDVAQHVIVLNFDCGTKKGFYLTEMKKFNKTLYPLRQRLLGRVLAANLYNVNPFHLKKRIEIGEKEKNLSSLPSSKGKMEFFPSFPQASLAGKASCFPEPQIVAFRNQEISEPLAEKISKITNKVFIRSPLTCDTPRLVCQLCYGWSLSEGYLVSIGEAVGIIAAQSIGEPGTQLTMRTFHTGGVFAGEMFDQLMAPYDGIVQYSSSIPGTLVRTTQGKIAFLTKVEGKLSVFEKNNSTFLSNSNNGDNHSLISHTISHKSFKLPAYTLLFIRNNETISKDQLIAELAFLSSKGKKKGEIAEFIVKSEIEGQLYSGSVNILEKYTDYNDIMTKSIDWGSVWILSGKICQLPVNSSFFALPGDLVDENAILSQIQWVVPMKSLLDTNSLIKPNLKKEIYFDFSLNQTKWFQKRNLENLNTLFNLKFGIEKKNRTKKRVLSQEKKSDFLNPSFSHSSRNYLYFSLPSKKTFSYYPFAYFSKIKEKNGGRETKSSFAMSGWGKKSLSFFPSLASDVPKLLSDFYPTSKKRNFKSFEKKELKLSSFSQTIFFNQDKSLLLKMKIKIQTISDFTKVSSKMITSRELKKNGMEKGKNGEKENSSLQRTFFSQGAKAPAFPELFSFFSSRLFPILPFKSSLVSSTFSHNSQLCTIRRQNKLVLSGNSNQFENFAYLKDKITINLPLIFLCIDNIYYKKIGYFFSLFPPESKIPREKFLPEEEGFSPPSFGRTFKNKNLAKLKDVFFVPKLLEQRNIISTKKKNSFKKNNQISNQLLHWFPKSYLTMKGGICVYRLTHDFFCQYINFHSSSFLFEKKRGTLICNVDGEMNKPVSSNILGRICWVNQDYKKTKLYTLKFFSYSKFIQQLTDRTKRLQRQIKREKKIGQADFFQTVLSMSQAKEKSSLQRTFFSQGAKSRKKVPPKTLLSGEMPIFSLSPSLCGLKPAKRSEKEKIWVKGEKAELFSLSNAFHQPQHSKKHKYSSFSLNFYKNLTSYCLKNKDKSVANCFSEKKKRQFLFFSEPKLSLFPDFLFSKSEKNIFYNANKKKYSFFYLKKTNSSKKSLTNNSIMNGFIYKPKDVVSAISLHKKFFLPGQKIIDDLSFDNFLIYVECIPEDNLSSLSETLYKSRFDKKICFNLKKLITNKMPRFIKIPTLLSTIPFAFLKSEFKEQNEKIAQRKADRQKNNKKSEAFFFKSNTLVSDFDSPFLSHLVVLITKVIEYPLYKPNHYKKALYNRQKTSEQSFFHYSCKVKSKMLNKIFKNNYHSNVLNKQTSSLRLLDKFPNTDLVLALKCKGIQKDLMENFLKNPLNLNLYVKLGKQKSFGKEKDKTFSVSQPFFKSSAFKKEKKSNSFSQAKAFDFNLTSKKSRKKANKLVENLANGKKSRAFPASKACGKLGKNYIFPLEERKNGKKERAKASSFPGLLSFSHLAFPIFFRKSFSKFFCMKFFSKSSIQLLELVLVGVQKNSVNNKIIGITVFNFFQKNKLKEEEKKRQEEKEIFRSLSLSPLFLSHLTRKKNSDFFSVSKSEALEKKKLQLLFFSHAAFPLKEISKNYSSKASFLSFFHFLDKKIKKQTRRQANFVVSAFEKSDFSFDPNINRKKKYFSNKAFNYENIKIMNNNISQSILQPNFYFNYYQKYPFGYYLINNINVFAPSSFSFSSLFSRNTANFKNYFLFYQLLSMFNRPNFQLHKSMEENLLQVYEQSTSYFSLISCFFQQPCFDAFFTQQVSFGFNEVKNVNHYSKNLTFSKKIGKRREFYLSPFLRSKIYFKKNSFSEQGEIALTQYLSPFMGEILNHENYYWSQNTQKNRYLLLTKKDQISFLSTNYNTQKESINNSSFFILKNKKNTPNLGEFLTKGDCCFISKSQNSIISSESGLIVHSNKSKITLRKAQSFFLSPNCIFHYSHGDLVEKNKSILSLPYEQLKTGDIVQGIPKVEQLLEARSTFKGKEEEDNLHKLLKYAFELYKTKFSLKLSVRKSFSFIQLILVNSVQRIYRSQGVSISDKHLEVIVKQMTSKVQITSRGDSSFFRGEHVDLYIVETWNALHPQLKKICYKPILLGISRSSLEVNSFLSAASFQHTKKVLSRSAFKTNIDFLNGLKENVIIGNLISAGTGNLNN.

Positions 336, 455, 462, and 465 each coordinate Zn(2+).

The protein belongs to the RNA polymerase beta' chain family. RpoC2 subfamily. In plastids the minimal PEP RNA polymerase catalytic core is composed of four subunits: alpha, beta, beta', and beta''. When a (nuclear-encoded) sigma factor is associated with the core the holoenzyme is formed, which can initiate transcription. Requires Zn(2+) as cofactor.

The protein localises to the plastid. Its subcellular location is the chloroplast. The catalysed reaction is RNA(n) + a ribonucleoside 5'-triphosphate = RNA(n+1) + diphosphate. Functionally, DNA-dependent RNA polymerase catalyzes the transcription of DNA into RNA using the four ribonucleoside triphosphates as substrates. The sequence is that of DNA-directed RNA polymerase subunit beta'' from Stigeoclonium helveticum (Green alga).